Reading from the N-terminus, the 134-residue chain is Phosphoribosyl-AMP cyclohydrolase (134 aa).

D77 lines the Mg(2+) pocket. Position 78 (C78) interacts with Zn(2+). Positions 79 and 81 each coordinate Mg(2+). Positions 95 and 102 each coordinate Zn(2+).

This sequence belongs to the PRA-CH family. Homodimer. Mg(2+) is required as a cofactor. Requires Zn(2+) as cofactor.

The protein resides in the cytoplasm. The enzyme catalyses 1-(5-phospho-beta-D-ribosyl)-5'-AMP + H2O = 1-(5-phospho-beta-D-ribosyl)-5-[(5-phospho-beta-D-ribosylamino)methylideneamino]imidazole-4-carboxamide. It participates in amino-acid biosynthesis; L-histidine biosynthesis; L-histidine from 5-phospho-alpha-D-ribose 1-diphosphate: step 3/9. Its function is as follows. Catalyzes the hydrolysis of the adenine ring of phosphoribosyl-AMP. This chain is Phosphoribosyl-AMP cyclohydrolase, found in Pseudomonas aeruginosa (strain LESB58).